Here is a 433-residue protein sequence, read N- to C-terminus: Casein kinase 1-like protein 5 (433 aa).

The region spanning 9–278 (FRLGRKIGSG…LKRLFRNLFI (270 aa)) is the Protein kinase domain. Residues 15-23 (IGSGSFGEI) and Lys38 contribute to the ATP site. Asp128 acts as the Proton acceptor in catalysis. The segment at 297–433 (QSQSGNPQPR…DDVEPQSKAL (137 aa)) is disordered. The segment covering 342–359 (LKQKDKNGNDSAIAKDKL) has biased composition (basic and acidic residues). The segment covering 362-375 (GSLNLGRSEGSSSR) has biased composition (low complexity). Residue Ser390 is modified to Phosphoserine. The span at 407-423 (INNNAGDETAATPQSNG) shows a compositional bias: polar residues.

This sequence belongs to the protein kinase superfamily. CK1 Ser/Thr protein kinase family. Casein kinase I subfamily. As to quaternary structure, monomer. Post-translationally, autophosphorylated.

The protein resides in the cytoplasm. It catalyses the reaction L-seryl-[protein] + ATP = O-phospho-L-seryl-[protein] + ADP + H(+). The enzyme catalyses L-threonyl-[protein] + ATP = O-phospho-L-threonyl-[protein] + ADP + H(+). In terms of biological role, casein kinases are operationally defined by their preferential utilization of acidic proteins such as caseins as substrates. It can phosphorylate a large number of proteins. This Arabidopsis thaliana (Mouse-ear cress) protein is Casein kinase 1-like protein 5.